Consider the following 269-residue polypeptide: Regulatory protein RecX (269 aa).

The protein belongs to the RecX family.

Its subcellular location is the cytoplasm. Modulates RecA activity. In Geobacillus thermodenitrificans (strain NG80-2), this protein is Regulatory protein RecX.